The chain runs to 260 residues: Hydroxyethylthiazole kinase (260 aa).

Arginine 126 and serine 172 together coordinate ATP. Residue glycine 199 participates in substrate binding.

Belongs to the Thz kinase family. Requires Mg(2+) as cofactor.

The catalysed reaction is 5-(2-hydroxyethyl)-4-methylthiazole + ATP = 4-methyl-5-(2-phosphooxyethyl)-thiazole + ADP + H(+). It functions in the pathway cofactor biosynthesis; thiamine diphosphate biosynthesis; 4-methyl-5-(2-phosphoethyl)-thiazole from 5-(2-hydroxyethyl)-4-methylthiazole: step 1/1. In terms of biological role, catalyzes the phosphorylation of the hydroxyl group of 4-methyl-5-beta-hydroxyethylthiazole (THZ). This is Hydroxyethylthiazole kinase from Burkholderia thailandensis (strain ATCC 700388 / DSM 13276 / CCUG 48851 / CIP 106301 / E264).